The sequence spans 549 residues: MAYNNSVRKRKKDIQDANGFHRDQTIDKKSRATNKLEESLPTFKVFIVLFFIRLLNSLTIKTFFQADEYYQCLEPAYNFVFGSGYITWEWEEGIRSSIHPLIYALGYKMVSYVHFDDKPIILIPKVIGALIASIGEVYLYKFSKKFTKNEKLARLTLILSLLSPFNWYIITRSFSNSFEMVLTTIAFTYWPWDNVISYKDISMSCIIAFISCIVRPTNGIIWLYLGINFMIKNYKLEKQSGKLMKLILILSIELILILLVNTGLDYIFYGKTTFPLYNFVEFNVIRNLSIFYGVAPWHFYLFQGVPIILMTYLPWLLHSAIVLKKYKSLLGQVAILMIGGFSLIDHKEIRFIYPLQPIFMLMVAYSIHETKHKFQRLYKFLVPVIIILNLIIAIFFTQVHERGVIDIVQYLRNNPDIESFGFLTPCHSTPWQSHINNPNLVNKSWFLTCEPPLHLTTTSLKEIKSYRDESDQFYDNPAQFLSEHFQSFADSRNTGASNWPSRLIIFEPLENFMDDFLRGSNYFECERFFNSYFHWDDRRKGDIIVYCQI.

Residues 1–39 (MAYNNSVRKRKKDIQDANGFHRDQTIDKKSRATNKLEES) lie on the Cytoplasmic side of the membrane. The helical transmembrane segment at 40 to 60 (LPTFKVFIVLFFIRLLNSLTI) threads the bilayer. Residues 61 to 119 (KTFFQADEYYQCLEPAYNFVFGSGYITWEWEEGIRSSIHPLIYALGYKMVSYVHFDDKP) are Lumenal-facing. The helical transmembrane segment at 120-140 (IILIPKVIGALIASIGEVYLY) threads the bilayer. Topologically, residues 141 to 154 (KFSKKFTKNEKLAR) are cytoplasmic. A helical membrane pass occupies residues 155–175 (LTLILSLLSPFNWYIITRSFS). Residues 176-205 (NSFEMVLTTIAFTYWPWDNVISYKDISMSC) lie on the Lumenal side of the membrane. A helical transmembrane segment spans residues 206–226 (IIAFISCIVRPTNGIIWLYLG). Residues 227–246 (INFMIKNYKLEKQSGKLMKL) are Cytoplasmic-facing. A helical membrane pass occupies residues 247–267 (ILILSIELILILLVNTGLDYI). Topologically, residues 268 to 289 (FYGKTTFPLYNFVEFNVIRNLS) are lumenal. Residue Asn287 is glycosylated (N-linked (GlcNAc...) asparagine). The chain crosses the membrane as a helical span at residues 290–310 (IFYGVAPWHFYLFQGVPIILM). The Cytoplasmic segment spans residues 311 to 328 (TYLPWLLHSAIVLKKYKS). The chain crosses the membrane as a helical span at residues 329-349 (LLGQVAILMIGGFSLIDHKEI). Arg350 is a topological domain (lumenal). A helical membrane pass occupies residues 351 to 367 (FIYPLQPIFMLMVAYSI). Residues 368–379 (HETKHKFQRLYK) lie on the Cytoplasmic side of the membrane. A helical membrane pass occupies residues 380-400 (FLVPVIIILNLIIAIFFTQVH). Topologically, residues 401-549 (ERGVIDIVQY…KGDIIVYCQI (149 aa)) are lumenal. A glycan (N-linked (GlcNAc...) asparagine) is linked at Asn442.

It belongs to the glycosyltransferase 22 family. PIGB subfamily.

The protein resides in the endoplasmic reticulum membrane. It participates in glycolipid biosynthesis; glycosylphosphatidylinositol-anchor biosynthesis. In terms of biological role, mannosyltransferase involved in glycosylphosphatidylinositol-anchor biosynthesis. Transfers the third mannose to Man2-GlcN-acyl-PI during GPI precursor assembly. The protein is GPI mannosyltransferase 3 (GPI10) of Debaryomyces hansenii (strain ATCC 36239 / CBS 767 / BCRC 21394 / JCM 1990 / NBRC 0083 / IGC 2968) (Yeast).